A 415-amino-acid polypeptide reads, in one-letter code: Esterase FrsA (415 aa).

It belongs to the FrsA family.

It carries out the reaction a carboxylic ester + H2O = an alcohol + a carboxylate + H(+). Catalyzes the hydrolysis of esters. The polypeptide is Esterase FrsA (Yersinia pseudotuberculosis serotype O:1b (strain IP 31758)).